The primary structure comprises 207 residues: Large ribosomal subunit protein uL4 (207 aa).

The segment at 52-75 (KNRSAVRGGGKKPWRQKGTGRARQ) is disordered. A compositionally biased stretch (basic residues) spans 60–71 (GGKKPWRQKGTG).

This sequence belongs to the universal ribosomal protein uL4 family. As to quaternary structure, part of the 50S ribosomal subunit.

In terms of biological role, one of the primary rRNA binding proteins, this protein initially binds near the 5'-end of the 23S rRNA. It is important during the early stages of 50S assembly. It makes multiple contacts with different domains of the 23S rRNA in the assembled 50S subunit and ribosome. Forms part of the polypeptide exit tunnel. In Limosilactobacillus fermentum (strain NBRC 3956 / LMG 18251) (Lactobacillus fermentum), this protein is Large ribosomal subunit protein uL4.